The primary structure comprises 367 residues: D-alanine--D-alanine ligase (367 aa).

The ATP-grasp domain occupies 150-357; it reads KKLLASAGLP…YPTLLATMVE (208 aa). 178 to 233 is a binding site for ATP; the sequence is RERLGLPVFVKPSRGGSSIGVSRVTAWDELPAAIELARRHDPKVIIEAAVPGRELE. Asp312, Glu324, and Asn326 together coordinate Mg(2+).

The protein belongs to the D-alanine--D-alanine ligase family. The cofactor is Mg(2+). It depends on Mn(2+) as a cofactor.

Its subcellular location is the cytoplasm. The catalysed reaction is 2 D-alanine + ATP = D-alanyl-D-alanine + ADP + phosphate + H(+). It participates in cell wall biogenesis; peptidoglycan biosynthesis. Functionally, cell wall formation. The protein is D-alanine--D-alanine ligase of Mycolicibacterium gilvum (strain PYR-GCK) (Mycobacterium gilvum (strain PYR-GCK)).